Here is a 293-residue protein sequence, read N- to C-terminus: Diaminopimelate epimerase (293 aa).

Residues asparagine 13, glutamine 46, and asparagine 66 each contribute to the substrate site. Cysteine 75 (proton donor) is an active-site residue. Residues 76-77, asparagine 162, asparagine 195, and 213-214 each bind substrate; these read GN and ER. Cysteine 222 (proton acceptor) is an active-site residue. Residue 223–224 coordinates substrate; that stretch reads GT.

The protein belongs to the diaminopimelate epimerase family. As to quaternary structure, homodimer.

The protein resides in the cytoplasm. It carries out the reaction (2S,6S)-2,6-diaminopimelate = meso-2,6-diaminopimelate. It functions in the pathway amino-acid biosynthesis; L-lysine biosynthesis via DAP pathway; DL-2,6-diaminopimelate from LL-2,6-diaminopimelate: step 1/1. Functionally, catalyzes the stereoinversion of LL-2,6-diaminopimelate (L,L-DAP) to meso-diaminopimelate (meso-DAP), a precursor of L-lysine and an essential component of the bacterial peptidoglycan. The protein is Diaminopimelate epimerase of Psychrobacter sp. (strain PRwf-1).